Consider the following 452-residue polypeptide: Probable glycine dehydrogenase (decarboxylating) subunit 1 (452 aa).

The protein belongs to the GcvP family. N-terminal subunit subfamily. In terms of assembly, the glycine cleavage system is composed of four proteins: P, T, L and H. In this organism, the P 'protein' is a heterodimer of two subunits.

The catalysed reaction is N(6)-[(R)-lipoyl]-L-lysyl-[glycine-cleavage complex H protein] + glycine + H(+) = N(6)-[(R)-S(8)-aminomethyldihydrolipoyl]-L-lysyl-[glycine-cleavage complex H protein] + CO2. Functionally, the glycine cleavage system catalyzes the degradation of glycine. The P protein binds the alpha-amino group of glycine through its pyridoxal phosphate cofactor; CO(2) is released and the remaining methylamine moiety is then transferred to the lipoamide cofactor of the H protein. The chain is Probable glycine dehydrogenase (decarboxylating) subunit 1 from Novosphingobium aromaticivorans (strain ATCC 700278 / DSM 12444 / CCUG 56034 / CIP 105152 / NBRC 16084 / F199).